The sequence spans 298 residues: Acetylglutamate kinase (298 aa).

Residues 69–70 (GG), R91, and N196 each bind substrate.

This sequence belongs to the acetylglutamate kinase family. ArgB subfamily.

It is found in the cytoplasm. The enzyme catalyses N-acetyl-L-glutamate + ATP = N-acetyl-L-glutamyl 5-phosphate + ADP. Its pathway is amino-acid biosynthesis; L-arginine biosynthesis; N(2)-acetyl-L-ornithine from L-glutamate: step 2/4. Its function is as follows. Catalyzes the ATP-dependent phosphorylation of N-acetyl-L-glutamate. This Rhodopseudomonas palustris (strain BisB18) protein is Acetylglutamate kinase.